Here is a 426-residue protein sequence, read N- to C-terminus: D-tagatose-1,6-bisphosphate aldolase subunit KbaZ (426 aa).

It belongs to the GatZ/KbaZ family. KbaZ subfamily. In terms of assembly, forms a complex with KbaY.

The protein operates within carbohydrate metabolism; D-tagatose 6-phosphate degradation; D-glyceraldehyde 3-phosphate and glycerone phosphate from D-tagatose 6-phosphate: step 2/2. Its function is as follows. Component of the tagatose-1,6-bisphosphate aldolase KbaYZ that is required for full activity and stability of the Y subunit. Could have a chaperone-like function for the proper and stable folding of KbaY. When expressed alone, KbaZ does not show any aldolase activity. The chain is D-tagatose-1,6-bisphosphate aldolase subunit KbaZ from Escherichia coli O127:H6 (strain E2348/69 / EPEC).